The primary structure comprises 69 residues: Regulatory protein MokC (69 aa).

Residues 24–44 form a helical membrane-spanning segment; it reads KAMIVALIVICITAVVAALVT.

The protein belongs to the Hok/Gef family.

The protein localises to the cell inner membrane. Functionally, might be the toxic component of a type I toxin-antitoxin (TA) system. Regulatory peptide which completely overlaps hokC and enables hokC expression. The protein is Regulatory protein MokC (mokC) of Escherichia coli (strain K12).